We begin with the raw amino-acid sequence, 590 residues long: Aspartate--tRNA(Asp/Asn) ligase (590 aa).

Residue E176 coordinates L-aspartate. Positions 200–203 are aspartate; it reads QLFK. L-aspartate is bound by residues R222 and H451. 222–224 provides a ligand contact to ATP; it reads RDE. Residue E485 coordinates ATP. Residue R492 participates in L-aspartate binding. ATP is bound at residue 537–540; the sequence is GIDR.

It belongs to the class-II aminoacyl-tRNA synthetase family. Type 1 subfamily. In terms of assembly, homodimer.

It localises to the cytoplasm. It carries out the reaction tRNA(Asx) + L-aspartate + ATP = L-aspartyl-tRNA(Asx) + AMP + diphosphate. In terms of biological role, aspartyl-tRNA synthetase with relaxed tRNA specificity since it is able to aspartylate not only its cognate tRNA(Asp) but also tRNA(Asn). Reaction proceeds in two steps: L-aspartate is first activated by ATP to form Asp-AMP and then transferred to the acceptor end of tRNA(Asp/Asn). The protein is Aspartate--tRNA(Asp/Asn) ligase of Ehrlichia canis (strain Jake).